Consider the following 456-residue polypeptide: MATTQSVTRIKKGLDLPITGCPEQHMEAGPAIRQVALLGDDYIGMKPTMLVSAGDRVVLGQPVFEDKKTPGVIYTAPASGTVVDVVRGAKRKFEAVVIDVDNDSTETTTIDGIAGSDPISIAREKLVDGLVQIGLWSAFRTRPFGKVPTIESRPHSIFVTAIDTNPLAADPAVVLADRKDQFVIGLQALTRLTDGAVHLCQAEKASIPGGDVAGVQSASFAGPHPAGLPGTHIHHLDPVSLNKTVWYIGYQDVIAIGSFLQTGQLDTRRVISLAGPKVNQPRLIETRLGACIDELIDGEVDTSVKLRVISGSVLNGHIATAPHQFLGRYDNQVSVIEEGDHREFLGWQKPGFDKFSVSRIFASAMTPDRKFDFTSSTGGSERAMVPLGTYEKVMPMDILATQLLRALIVRDTDSAQQLGVLELEEEDLALCTFVCPGKYEYGSLIRENLTTIEREG.

The protein belongs to the NqrA family. Composed of six subunits; NqrA, NqrB, NqrC, NqrD, NqrE and NqrF.

It catalyses the reaction a ubiquinone + n Na(+)(in) + NADH + H(+) = a ubiquinol + n Na(+)(out) + NAD(+). In terms of biological role, NQR complex catalyzes the reduction of ubiquinone-1 to ubiquinol by two successive reactions, coupled with the transport of Na(+) ions from the cytoplasm to the periplasm. NqrA to NqrE are probably involved in the second step, the conversion of ubisemiquinone to ubiquinol. This Rhodopirellula baltica (strain DSM 10527 / NCIMB 13988 / SH1) protein is Na(+)-translocating NADH-quinone reductase subunit A.